Here is a 255-residue protein sequence, read N- to C-terminus: Pimeloyl-[acyl-carrier protein] methyl ester esterase (255 aa).

An AB hydrolase-1 domain is found at 16–242 (LVLLHGWGLN…AAHAPFISHP (227 aa)). Residues Trp22, 82 to 83 (SL), and 143 to 147 (FLALQ) contribute to the substrate site. Catalysis depends on Ser82, which acts as the Nucleophile. Catalysis depends on residues Asp207 and His235. Substrate is bound at residue His235.

It belongs to the AB hydrolase superfamily. Carboxylesterase BioH family. As to quaternary structure, monomer.

It is found in the cytoplasm. The enzyme catalyses 6-carboxyhexanoyl-[ACP] methyl ester + H2O = 6-carboxyhexanoyl-[ACP] + methanol + H(+). The protein operates within cofactor biosynthesis; biotin biosynthesis. Functionally, the physiological role of BioH is to remove the methyl group introduced by BioC when the pimeloyl moiety is complete. It allows to synthesize pimeloyl-ACP via the fatty acid synthetic pathway through the hydrolysis of the ester bonds of pimeloyl-ACP esters. This Pectobacterium atrosepticum (strain SCRI 1043 / ATCC BAA-672) (Erwinia carotovora subsp. atroseptica) protein is Pimeloyl-[acyl-carrier protein] methyl ester esterase.